Reading from the N-terminus, the 310-residue chain is MSRPRKPKGRPISGWLILDKPLDFGSTEAVSKIKWLFKAQKAGHAGTLDPLASGMLPIALGDATKTVPYVMDGRKIYEFTVAWGEERSTDDLEGEVVRSSADRPAEEAIRALLPKYTGVIAQVPPQFSAIKIGGERAYDLAREGETVDIPAREVEVFRLSLIGSAPSLAQFEIECGKGTYVRSLARDMGRDLGCFGHIASLRRTFVAPFGEEDMVPLADLVALEKIEDEAERLAALDEHLIDTGEALSDLPHIAVNDDQAHRLRMGNPIILRGRDAPLPTPEAYATVQGKLVAIGEIAEGEFRPKRVFAG.

Asp-49 acts as the Nucleophile in catalysis.

It belongs to the pseudouridine synthase TruB family. Type 1 subfamily.

It catalyses the reaction uridine(55) in tRNA = pseudouridine(55) in tRNA. Responsible for synthesis of pseudouridine from uracil-55 in the psi GC loop of transfer RNAs. The protein is tRNA pseudouridine synthase B of Sinorhizobium medicae (strain WSM419) (Ensifer medicae).